Consider the following 493-residue polypeptide: Cysteine--tRNA ligase (493 aa).

Cysteine 29 serves as a coordination point for Zn(2+). The 'HIGH' region motif lies at 31–41; the sequence is ATVQSEPHIGH. Residues cysteine 214, histidine 239, and glutamate 243 each contribute to the Zn(2+) site. Positions 270–274 match the 'KMSKS' region motif; that stretch reads KMSKS. Residue lysine 273 coordinates ATP.

Belongs to the class-I aminoacyl-tRNA synthetase family. As to quaternary structure, monomer. The cofactor is Zn(2+).

It is found in the cytoplasm. The enzyme catalyses tRNA(Cys) + L-cysteine + ATP = L-cysteinyl-tRNA(Cys) + AMP + diphosphate. The chain is Cysteine--tRNA ligase from Renibacterium salmoninarum (strain ATCC 33209 / DSM 20767 / JCM 11484 / NBRC 15589 / NCIMB 2235).